The primary structure comprises 167 residues: Ureidoglycolate lyase (167 aa).

Belongs to the ureidoglycolate lyase family. As to quaternary structure, homodimer. Ni(2+) is required as a cofactor.

The catalysed reaction is (S)-ureidoglycolate = urea + glyoxylate. Its pathway is nitrogen metabolism; (S)-allantoin degradation. In terms of biological role, catalyzes the catabolism of the allantoin degradation intermediate (S)-ureidoglycolate, generating urea and glyoxylate. Involved in the utilization of allantoin as nitrogen source. This chain is Ureidoglycolate lyase, found in Pseudomonas putida (strain W619).